The primary structure comprises 122 residues: MASFLQRLVDPRKNFLARMHMKSVSNRLRRYGLRYDDLYDPLYDLDIKEALNRLPREIVDARNQRLMRAMDLSMKHEYLPDNLQAVQTPFRSYLQDMLALVKRERAEREALGALPLYQRTIP.

The protein belongs to the UQCRB/QCR7 family. In terms of assembly, component of the ubiquinol-cytochrome c oxidoreductase (cytochrome b-c1 complex, complex III, CIII), a multisubunit enzyme composed of 10 subunits. The complex is composed of 3 respiratory subunits cytochrome b (MT-CYB), cytochrome c1 (CYC1-1 or CYC1-2) and Rieske protein (UCR1-1 or UCR1-2), 2 core protein subunits MPPalpha1 (or MPPalpha2) and MPPB, and 5 low-molecular weight protein subunits QCR7-1 (or QCR7-2), UCRQ-1 (or UCRQ-2), QCR9, UCRY and probably QCR6-1 (or QCR6-2). The complex exists as an obligatory dimer and forms supercomplexes (SCs) in the inner mitochondrial membrane with NADH-ubiquinone oxidoreductase (complex I, CI), resulting in different assemblies (supercomplexes SCI(1)III(2) and SCI(2)III(4)).

Its subcellular location is the mitochondrion inner membrane. Functionally, component of the ubiquinol-cytochrome c oxidoreductase, a multisubunit transmembrane complex that is part of the mitochondrial electron transport chain which drives oxidative phosphorylation. The respiratory chain contains 3 multisubunit complexes succinate dehydrogenase (complex II, CII), ubiquinol-cytochrome c oxidoreductase (cytochrome b-c1 complex, complex III, CIII) and cytochrome c oxidase (complex IV, CIV), that cooperate to transfer electrons derived from NADH and succinate to molecular oxygen, creating an electrochemical gradient over the inner membrane that drives transmembrane transport and the ATP synthase. The cytochrome b-c1 complex catalyzes electron transfer from ubiquinol to cytochrome c, linking this redox reaction to translocation of protons across the mitochondrial inner membrane, with protons being carried across the membrane as hydrogens on the quinol. In the process called Q cycle, 2 protons are consumed from the matrix, 4 protons are released into the intermembrane space and 2 electrons are passed to cytochrome c. The polypeptide is Cytochrome b-c1 complex subunit 7-2, mitochondrial (QCR7-2) (Arabidopsis thaliana (Mouse-ear cress)).